We begin with the raw amino-acid sequence, 163 residues long: D-aminoacyl-tRNA deacylase (163 aa).

Residues 141 to 142 (GP) carry the Gly-cisPro motif, important for rejection of L-amino acids motif.

Belongs to the DTD family. In terms of assembly, homodimer.

It is found in the cytoplasm. It carries out the reaction glycyl-tRNA(Ala) + H2O = tRNA(Ala) + glycine + H(+). The catalysed reaction is a D-aminoacyl-tRNA + H2O = a tRNA + a D-alpha-amino acid + H(+). Functionally, an aminoacyl-tRNA editing enzyme that deacylates mischarged D-aminoacyl-tRNAs. Also deacylates mischarged glycyl-tRNA(Ala), protecting cells against glycine mischarging by AlaRS. Acts via tRNA-based rather than protein-based catalysis; rejects L-amino acids rather than detecting D-amino acids in the active site. By recycling D-aminoacyl-tRNA to D-amino acids and free tRNA molecules, this enzyme counteracts the toxicity associated with the formation of D-aminoacyl-tRNA entities in vivo and helps enforce protein L-homochirality. In Neisseria gonorrhoeae (strain ATCC 700825 / FA 1090), this protein is D-aminoacyl-tRNA deacylase.